A 210-amino-acid polypeptide reads, in one-letter code: Vacuolar protein sorting-associated protein 28 homolog 2 (210 aa).

Residues 1–99 enclose the VPS28 N-terminal domain; that stretch reads MMEVKLWNDK…VTSGLPATVE (99 aa). In terms of domain architecture, VPS28 C-terminal spans 109–205; sequence SNSASIVAEC…SSYNSFMAAL (97 aa).

Belongs to the VPS28 family. In terms of assembly, component of the endosomal sorting required for transport complex I (ESCRT-I), composed of ELC, VPS28 and VPS37. Interacts with ELC.

It localises to the endosome. In terms of biological role, component of the ESCRT-I complex (endosomal sorting complex required for transport I), a regulator of vesicular trafficking process. Required for the sorting of endocytic ubiquitinated cargos into multivesicular bodies (MVBs). Mediates the association to the ESCRT-0 complex. This is Vacuolar protein sorting-associated protein 28 homolog 2 (VPS28-2) from Arabidopsis thaliana (Mouse-ear cress).